The sequence spans 715 residues: Coiled-coil domain-containing protein 170 (715 aa).

Coiled-coil stretches lie at residues 30–286, 360–418, and 478–656; these read VTRE…AGQQ, ESRD…LVSG, and ENKT…FREV. A required for binding to microtubules and Golgi apparatus location region spans residues 355 to 591; the sequence is MDSREESRDR…DLNKSRDQLE (237 aa).

In terms of assembly, binds Golgi-associated microtubules.

Its subcellular location is the golgi apparatus. Plays a role in Golgi-associated microtubules organization and stabilization. The polypeptide is Coiled-coil domain-containing protein 170 (Homo sapiens (Human)).